The following is a 537-amino-acid chain: Chaperonin GroEL (537 aa).

ATP contacts are provided by residues 29–32 (TLGP), 86–90 (DGTTT), Gly-413, 477–479 (NAA), and Asp-493.

The protein belongs to the chaperonin (HSP60) family. Forms a cylinder of 14 subunits composed of two heptameric rings stacked back-to-back. Interacts with the co-chaperonin GroES.

The protein localises to the cytoplasm. The catalysed reaction is ATP + H2O + a folded polypeptide = ADP + phosphate + an unfolded polypeptide.. In terms of biological role, together with its co-chaperonin GroES, plays an essential role in assisting protein folding. The GroEL-GroES system forms a nano-cage that allows encapsulation of the non-native substrate proteins and provides a physical environment optimized to promote and accelerate protein folding. The polypeptide is Chaperonin GroEL (Parascardovia denticolens (Bifidobacterium denticolens)).